We begin with the raw amino-acid sequence, 184 residues long: dCTP deaminase (184 aa).

DCTP-binding positions include 107–112, 131–133, Gln-152, Tyr-166, and Gln-176; these read KSTYAR and TLE. The Proton donor/acceptor role is filled by Glu-133.

This sequence belongs to the dCTP deaminase family. As to quaternary structure, homotrimer.

It carries out the reaction dCTP + H2O + H(+) = dUTP + NH4(+). Its pathway is pyrimidine metabolism; dUMP biosynthesis; dUMP from dCTP (dUTP route): step 1/2. Functionally, catalyzes the deamination of dCTP to dUTP. The chain is dCTP deaminase from Rhizorhabdus wittichii (strain DSM 6014 / CCUG 31198 / JCM 15750 / NBRC 105917 / EY 4224 / RW1) (Sphingomonas wittichii).